A 131-amino-acid chain; its full sequence is MIVGLGTDIVEIARIEARIPTAGDEALLSCRLAKRVLTKTEFALFVASSQPGRYLAKRFAAKEAAAKALGTGIGRGVSFQHIEISNNTNGAPLVAFSDGAAERLAQLGGSRAHLSIADEKHYATATVILES.

Residues aspartate 8 and glutamate 63 each coordinate Mg(2+).

Belongs to the P-Pant transferase superfamily. AcpS family. The cofactor is Mg(2+).

It is found in the cytoplasm. It catalyses the reaction apo-[ACP] + CoA = holo-[ACP] + adenosine 3',5'-bisphosphate + H(+). In terms of biological role, transfers the 4'-phosphopantetheine moiety from coenzyme A to a Ser of acyl-carrier-protein. The sequence is that of Holo-[acyl-carrier-protein] synthase from Shewanella halifaxensis (strain HAW-EB4).